We begin with the raw amino-acid sequence, 520 residues long: Maturase K (520 aa).

The protein belongs to the intron maturase 2 family. MatK subfamily.

It is found in the plastid. The protein localises to the chloroplast. Functionally, usually encoded in the trnK tRNA gene intron. Probably assists in splicing its own and other chloroplast group II introns. The sequence is that of Maturase K from Beaucarnea recurvata (Elephant-foot tree).